The primary structure comprises 376 residues: uncharacterized protein (376 aa).

A helical membrane pass occupies residues 24–44 (YLSIISIISVFLLNSSIVYSC). Position 251 (histidine 251) interacts with Zn(2+).

Belongs to the peptidase M23B family. Zn(2+) is required as a cofactor.

It localises to the cell membrane. This is an uncharacterized protein from Buchnera aphidicola subsp. Baizongia pistaciae (strain Bp).